A 431-amino-acid polypeptide reads, in one-letter code: Histidinol dehydrogenase (431 aa).

Residues Tyr-127, Gln-189, and Asn-212 each coordinate NAD(+). Residues Ser-237, Gln-259, and His-262 each coordinate substrate. Residues Gln-259 and His-262 each coordinate Zn(2+). Residues Glu-326 and His-327 each act as proton acceptor in the active site. Residues His-327, Asp-360, Glu-414, and His-419 each coordinate substrate. Asp-360 is a binding site for Zn(2+). Residue His-419 participates in Zn(2+) binding.

It belongs to the histidinol dehydrogenase family. The cofactor is Zn(2+).

It carries out the reaction L-histidinol + 2 NAD(+) + H2O = L-histidine + 2 NADH + 3 H(+). It participates in amino-acid biosynthesis; L-histidine biosynthesis; L-histidine from 5-phospho-alpha-D-ribose 1-diphosphate: step 9/9. In terms of biological role, catalyzes the sequential NAD-dependent oxidations of L-histidinol to L-histidinaldehyde and then to L-histidine. The polypeptide is Histidinol dehydrogenase (Xanthomonas axonopodis pv. citri (strain 306)).